Reading from the N-terminus, the 1133-residue chain is MAYPELDAADFLQQLARRKEFKSLISPPVDQKELIRDLRAHFVQIGGPGCEKGGRAFFPCDPYASPFPSIKGLQLHNAQLFVQNFQNPNTPYSRLLLNWQTGTGKSIAAIAIARQFMNHYMNFIENAPWIFVVGFTRAIIQTEMLRRPELGFVSYKEVAELHRLLHIAKQSGSTTSVESRHLNGFVSTLKRRLTDRNRGGFFQFYGYKEFASKLFNITSKGEEKNFDVLSLFHRSDEAEDTLNENDISQFVQKISEAETNGLIRVNQKIMEQLRGGLLIADEIHNVYNIQERNNYGIALQYVLDAFPPHQAPRAVFMSATPVTGSVMEYVDLLNLLVPRHELPNGQPLQRQQLFDSSGHSVKWKKDALALVERLSTGRVSFLLDTNTNFYPERIFAGKMLSYKDEKLPYLHFIECPMSEYQLETLKQLGPDPKISSNAYSIYDMVFPNPKFSKQTEPKAYGLFNSTETPTALSMASTDWLLENGVQIIEPSRRAPFNVSGSFLSLQPPMHISGLAFYSGKYTQMMKDILSIIRQGRGKILIYHNRVRMSGVLILQEILQSNGILNEVSSPVGTTRCSICAAIRDDHTHSDHQFIPVRFTILHSEIEPAVRERSLALFNASSNLEGHQLRILIGSKVIVEGLNFQAVRYEMIMSLPLDIPRLIQVFGRVVRKNSHMELPPSERNVTIYLYVSTTPDGGPELAKYAQKLKEYILIQEGDKALRKHAIDGFTNQIKIDKPMLESLPLSPSITPANVGATVLNTFEAYGYGEQEVKTISNIIISLFMARPVWTYSELWKAVSTPKLIQGITIDNKLFSEDNFALALISLCYSKNQCKELWIQNRLCTIMHVPAKPEHLYVAAVLNHKKEPVLDIETYIRDFQPPMMHSIRITKYLEHSQTKEPFQVLYEKFQKDFQDEPMEQVLIHYPASFHYTMLEALIIDNLAGMGALVEVYKKFFIAFSKKDIQPFPDIFKIISHVPGDDNTLVGYATEDSVRLITSREDKTWHEIPLYMLNINVKRKENDIVIGYMESKGKALKFKIRPPIQVLKKNEITDIRMLNRGAVCETRGREEQQKIANQLGISLNLTKISAIKLCLLIRNNLLQKEMEARNQPNGMQDGIRWFYLFNDKMPSLVHTS.

The Helicase ATP-binding domain maps to Lys-52 to Gln-352. Trp-99 to Ser-106 contributes to the ATP binding site. A DEAH box motif is present at residues Asp-281–His-284. The Helicase C-terminal domain occupies Met-524–Ala-724.

This sequence belongs to the DEAD box helicase family. DEAH subfamily.

The protein localises to the virion. The catalysed reaction is ATP + H2O = ADP + phosphate + H(+). In terms of biological role, putative initation factor. The chain is Early transcription factor large subunit homolog from Ornithodoros (relapsing fever ticks).